We begin with the raw amino-acid sequence, 250 residues long: Sulfate transporter CysZ (250 aa).

The next 4 membrane-spanning stretches (helical) occupy residues 27–47, 64–84, 150–170, and 210–230; these read FVVL…YYLF, FLSW…LATF, FLLL…WFLF, and MLVA…PVAV.

Belongs to the CysZ family.

The protein resides in the cell inner membrane. Its function is as follows. High affinity, high specificity proton-dependent sulfate transporter, which mediates sulfate uptake. Provides the sulfur source for the cysteine synthesis pathway. This chain is Sulfate transporter CysZ, found in Vibrio cholerae serotype O1 (strain ATCC 39541 / Classical Ogawa 395 / O395).